The chain runs to 337 residues: Anthranilate phosphoribosyltransferase (337 aa).

Residues glycine 82, 85-86 (GD), threonine 90, 92-95 (NIST), 110-118 (KHGGRSVSS), and serine 122 each bind 5-phospho-alpha-D-ribose 1-diphosphate. Position 82 (glycine 82) interacts with anthranilate. Serine 94 contributes to the Mg(2+) binding site. Position 168 (arginine 168) interacts with anthranilate. The Mg(2+) site is built by aspartate 226 and glutamate 227.

The protein belongs to the anthranilate phosphoribosyltransferase family. As to quaternary structure, homodimer. The cofactor is Mg(2+).

The enzyme catalyses N-(5-phospho-beta-D-ribosyl)anthranilate + diphosphate = 5-phospho-alpha-D-ribose 1-diphosphate + anthranilate. It participates in amino-acid biosynthesis; L-tryptophan biosynthesis; L-tryptophan from chorismate: step 2/5. Its function is as follows. Catalyzes the transfer of the phosphoribosyl group of 5-phosphorylribose-1-pyrophosphate (PRPP) to anthranilate to yield N-(5'-phosphoribosyl)-anthranilate (PRA). The polypeptide is Anthranilate phosphoribosyltransferase (Francisella tularensis subsp. novicida (strain U112)).